The primary structure comprises 282 residues: Putative phosphite transport system permease protein HtxC (282 aa).

The next 4 membrane-spanning stretches (helical) occupy residues 23-43 (HFATSVVVLSLLAVAWYVCQI), 81-101 (LAMATIGTIFATIIAFPLALM), 130-150 (VYALVFVAAVGFGPFSGVLAI), and 239-259 (FNKMITVLAVVLLMVSAIDFI). The 184-residue stretch at 77-260 (AGETLAMATI…LMVSAIDFIS (184 aa)) folds into the ABC transmembrane type-1 domain.

Belongs to the binding-protein-dependent transport system permease family.

Its subcellular location is the cell inner membrane. Probably forms part of a binding-protein-dependent hypophosphite transporter. This Stutzerimonas stutzeri (Pseudomonas stutzeri) protein is Putative phosphite transport system permease protein HtxC (htxC).